The primary structure comprises 330 residues: Ketol-acid reductoisomerase (NADP(+)) (330 aa).

The KARI N-terminal Rossmann domain occupies 3–184 (LSVYYDKDID…GGGRMGVLET (182 aa)). NADP(+) contacts are provided by residues 26–29 (YGTQ), Ser52, and Ser54. Residue His109 is part of the active site. Position 135 (Gly135) interacts with NADP(+). The KARI C-terminal knotted domain maps to 185 to 329 (SFKEECESDL…EILRTPFNHE (145 aa)). 4 residues coordinate Mg(2+): Asp193, Glu197, Glu229, and Glu233. Ser254 lines the substrate pocket.

Belongs to the ketol-acid reductoisomerase family. It depends on Mg(2+) as a cofactor.

The catalysed reaction is (2R)-2,3-dihydroxy-3-methylbutanoate + NADP(+) = (2S)-2-acetolactate + NADPH + H(+). It carries out the reaction (2R,3R)-2,3-dihydroxy-3-methylpentanoate + NADP(+) = (S)-2-ethyl-2-hydroxy-3-oxobutanoate + NADPH + H(+). It functions in the pathway amino-acid biosynthesis; L-isoleucine biosynthesis; L-isoleucine from 2-oxobutanoate: step 2/4. The protein operates within amino-acid biosynthesis; L-valine biosynthesis; L-valine from pyruvate: step 2/4. Functionally, involved in the biosynthesis of branched-chain amino acids (BCAA). Catalyzes an alkyl-migration followed by a ketol-acid reduction of (S)-2-acetolactate (S2AL) to yield (R)-2,3-dihydroxy-isovalerate. In the isomerase reaction, S2AL is rearranged via a Mg-dependent methyl migration to produce 3-hydroxy-3-methyl-2-ketobutyrate (HMKB). In the reductase reaction, this 2-ketoacid undergoes a metal-dependent reduction by NADPH to yield (R)-2,3-dihydroxy-isovalerate. This Helicobacter acinonychis (strain Sheeba) protein is Ketol-acid reductoisomerase (NADP(+)).